The chain runs to 519 residues: Serine/threonine-protein kinase RIO3 (519 aa).

Residues serine 8, serine 112, serine 125, serine 127, and serine 128 each carry the phosphoserine modification. Residues 122 to 159 form a disordered region; the sequence is FEDSDSSEDEVDWQDTRDDPYRPAKPIPTPKKGFIGKG. Acidic residues predominate over residues 124-134; it reads DSDSSEDEVDW. The 269-residue stretch at 251–519 folds into the Protein kinase domain; the sequence is ETITGCISTG…DGSPPVLSAD (269 aa). ATP-binding positions include 257-265 and lysine 290; that span reads ISTGKESVV. Residue aspartate 406 is the Proton acceptor of the active site. Serine 512 is modified (phosphoserine).

The protein belongs to the protein kinase superfamily. RIO-type Ser/Thr kinase family. As to quaternary structure, interacts with CASP10. Interacts with IRF3; RIOK3 probably mediates the interaction of TBK1 with IRF3. Associated with 40S pre-ribosomal particles. Mg(2+) serves as cofactor. Autophosphorylated (in vitro).

The protein resides in the cytoplasm. It catalyses the reaction L-seryl-[protein] + ATP = O-phospho-L-seryl-[protein] + ADP + H(+). It carries out the reaction L-threonyl-[protein] + ATP = O-phospho-L-threonyl-[protein] + ADP + H(+). Functionally, involved in regulation of type I interferon (IFN)-dependent immune response which plays a critical role in the innate immune response against DNA and RNA viruses. May act as an adapter protein essential for the recruitment of TBK1 to IRF3. Phosphorylates IFIH1 on 'Ser-828' interfering with IFIH1 filament assembly on long dsRNA and resulting in attenuated IFIH1-signaling. Can inhibit CASP10 isoform 7-mediated activation of the NF-kappaB signaling pathway. May play a role in the biogenesis of the 40S ribosomal subunit. Involved in the processing of 21S pre-rRNA to the mature 18S rRNA. This Mus musculus (Mouse) protein is Serine/threonine-protein kinase RIO3 (Riok3).